The sequence spans 447 residues: N-succinylarginine dihydrolase (447 aa).

Residues alanine 21–serine 30, asparagine 112, and histidine 139–arginine 140 contribute to the substrate site. Glutamate 176 is a catalytic residue. Arginine 215 is a substrate binding site. Histidine 251 is a catalytic residue. Substrate is bound by residues aspartate 253 and asparagine 364. The active-site Nucleophile is the cysteine 370.

The protein belongs to the succinylarginine dihydrolase family. In terms of assembly, homodimer.

The catalysed reaction is N(2)-succinyl-L-arginine + 2 H2O + 2 H(+) = N(2)-succinyl-L-ornithine + 2 NH4(+) + CO2. Its pathway is amino-acid degradation; L-arginine degradation via AST pathway; L-glutamate and succinate from L-arginine: step 2/5. Functionally, catalyzes the hydrolysis of N(2)-succinylarginine into N(2)-succinylornithine, ammonia and CO(2). This chain is N-succinylarginine dihydrolase, found in Chromohalobacter salexigens (strain ATCC BAA-138 / DSM 3043 / CIP 106854 / NCIMB 13768 / 1H11).